Reading from the N-terminus, the 688-residue chain is MLFHFLQAGLRQCRPPARLVGLETGLSGARGPSLPATLANYSRLRNACRPPWRSPWKPVKKGKLLAVLLGPAVLGVGVRAARCQVELIAPPLIVPQGARPEPEFNWAEFWKLLRPQLIALLTAVLLAFGAALLNIRIPLMLGELVNVVSRYTREHAGNYLQEVQGPALKLLCLYGAQGLLTCGYIVLLSRVGERVAGSMRKSLFFSLLRQDVAFFDAEKTGLLVNRLTSDVQEFKSSFKQVISQGLRSLTQTVGCFLSLYYISPKLTGLLLVVMPVLVGSGALIGSFLRKLSRRAQEQVARATGLADEALGNVRTVKAFAMESREMELYSAEVDKSSGQNEVLGVGIAVFQGLSNVVLNCIVLGTIFAGGSLMSSKELSAGELMSFLVASQTVQRSMANMSVLFGQVVRGLSAGGRVFEFMSLEPTIPLSGGFKLPVLRGEIHFKDVSFSYPTRPGHEVLRSFDLRIPHGKTVALVGQSGGGKSTVAALLERFYDPTEGAVQLDGVDIRILDPSWLRGEVIGFINQEPVLFGTTIIENIRFGRPDATDAEVHEAAIQANADSFIRSFPEGYNTMLGERGVTLSGGQKQRVAIARALLKDPKILILDEATSALDTESERAVQVALDRARSGRTVLVIAHRLSTISEADFIVVLSKGQVAEFGTHQDLLRRGGLYADLIRRQNQESQEAQ.

The transit peptide at 1–31 (MLFHFLQAGLRQCRPPARLVGLETGLSGARG) directs the protein to the mitochondrion. 4 consecutive transmembrane segments (helical) span residues 115-135 (PQLI…LLNI), 168-188 (LKLL…IVLL), 268-288 (GLLL…GSFL), and 342-362 (VLGV…NCIV). The ABC transmembrane type-1 domain maps to 121-409 (LTAVLLAFGA…MSVLFGQVVR (289 aa)). An ABC transporter domain is found at 442–679 (IHFKDVSFSY…GGLYADLIRR (238 aa)). 477–484 (GQSGGGKS) provides a ligand contact to ATP.

Belongs to the ABC transporter superfamily. ABCB family. Multidrug resistance exporter (TC 3.A.1.201) subfamily. In terms of assembly, component of the mitochondrial potassium channel (mitoK(ATP)).

Its subcellular location is the mitochondrion inner membrane. In terms of biological role, ATP-binding subunit of the mitochondrial ATP-gated potassium channel (mitoK(ATP)). Together with pore-forming subunit CCDC51/MITOK of the mitoK(ATP) channel, mediates ATP-dependent potassium currents across the mitochondrial inner membrane. An increase in ATP intracellular levels closes the channel, inhibiting K(+) transport, whereas a decrease in ATP levels enhances K(+) uptake in the mitochondrial matrix. Plays a role in mitochondrial iron transport. Required for maintenance of normal cardiac function, possibly by influencing mitochondrial iron export and regulating the maturation of cytosolic iron sulfur cluster-containing enzymes. In Xenopus tropicalis (Western clawed frog), this protein is Mitochondrial potassium channel ATP-binding subunit.